A 206-amino-acid chain; its full sequence is Threonine efflux protein (206 aa).

The helical transmembrane segment at 1–21 (MLMLFLTVAMVHIVALMSPGP) threads the bilayer. At 22-43 (DFFFVSQTAVSRSRKEAMMGVL) the chain is on the periplasmic side. A helical membrane pass occupies residues 44–64 (GITCGVMVWAGIALLGLHLII). Over 65–66 (EK) the chain is Cytoplasmic. Residues 67–87 (MAWLHTLIMVGGGLYLCWMGY) traverse the membrane as a helical segment. Residues 88-149 (QMLRGALKKE…VGDNVGTTAR (62 aa)) are Periplasmic-facing. The helical transmembrane segment at 150 to 173 (WGIFALIIVETLAWFTVVASLFAL) threads the bilayer. Over 174 to 206 (PQMRRGYQRLAKWIDGFAGALFAGFGIHLIISR) the chain is Cytoplasmic.

The protein belongs to the Rht family.

It is found in the cell inner membrane. Its function is as follows. Conducts the efflux of threonine. In Escherichia coli O157:H7, this protein is Threonine efflux protein (rhtC).